The sequence spans 510 residues: MFIENFKVESPNVKYTESEIHSVYDYQTTELVHDEKNGTYQWTVKPKTVKYEFKTDVHVPKLGVMLVGWGGNNGSTLTGGVIANREGISWATKDKVQQANYFGSLTQASTIRVGSFNGEEIYAPFKSLLPMVNPDDVVFGGWDISDMNLADAMARAKVFDIDLQKQLRPYMESMVPLPGIYDPDFIAANQGSRANNVIKGTKKEQIDQIIKDIREFKEKNKVDKVVVLWTANTERYSNVVVGLNDTMENLFASVDRNEAEISPSTLYAIACILENVPFINGSPQNTFVPGLIDLAIKKNTLIGGDDFKSGQTKMKSVLVDFLVGAGIKPTSIVSYNHLGNNDGMNLSAPQTFRSKEISKSNVVDDMVSSNAILYEPGEHPDHVVVIKYVPYVGDSKRAMDEYTSEIFMGGKNTIVLHNTCEDSLLAAPIILDLVLLAELSTRIQLKAEGEGKFHSFHPVATILSYLTKAPLVPPGTPVVNALSKQRAMLENILRACVGLAPENNMILEYK.

The NAD(+) site is built by Gly-70, Gly-71, Asn-72, Asn-73, Asp-143, Ile-180, Gln-190, Arg-193, Thr-230, Ala-231, Asn-232, Thr-233, Gly-281, Ser-282, Asp-306, Ser-309, Asn-340, Asn-341, Asp-342, Lys-355, Gly-393, Asp-394, Asp-422, and Ser-423.

It belongs to the myo-inositol 1-phosphate synthase family. Requires NAD(+) as cofactor.

Its subcellular location is the cytoplasm. The protein resides in the cytosol. The protein localises to the nucleus. The enzyme catalyses D-glucose 6-phosphate = 1D-myo-inositol 3-phosphate. The protein operates within polyol metabolism; myo-inositol biosynthesis; myo-inositol from D-glucose 6-phosphate: step 1/2. Its function is as follows. Key enzyme in myo-inositol biosynthesis pathway that catalyzes the conversion of glucose 6-phosphate to 1-myo-inositol 1-phosphate in a NAD-dependent manner. This chain is Inositol-3-phosphate synthase (INPS1), found in Nicotiana paniculata.